The following is a 381-amino-acid chain: Cytochrome b (381 aa).

Transmembrane regions (helical) follow at residues 32–52, 76–98, 113–133, and 179–199; these read GGSLAGMMLASQMLTGILLAM, MILRYAHANGASLFFIVVYLHVL, VWISGVVILLVMIITAFIGYV, and FYSFHYTLPFILAGLSVFHIA. Residues histidine 82 and histidine 96 each contribute to the heme b site. 2 residues coordinate heme b: histidine 183 and histidine 197. Histidine 202 lines the a ubiquinone pocket. The next 4 helical transmembrane spans lie at 225 to 245, 289 to 309, 318 to 338, and 345 to 365; these read FGAKDLVGALFLALVFSILVF, AMGVLAIGLVFASLFAMPFIG, ITEWLYWTFLADVLLLTWLGG, and TSFVGQCCTAYLFFYLLVCQP.

It belongs to the cytochrome b family. As to quaternary structure, the main subunits of complex b-c1 are: cytochrome b, cytochrome c1 and the Rieske protein. Heme b is required as a cofactor.

It is found in the mitochondrion inner membrane. Its function is as follows. Component of the ubiquinol-cytochrome c reductase complex (complex III or cytochrome b-c1 complex) that is part of the mitochondrial respiratory chain. The b-c1 complex mediates electron transfer from ubiquinol to cytochrome c. Contributes to the generation of a proton gradient across the mitochondrial membrane that is then used for ATP synthesis. The chain is Cytochrome b (MT-CYB) from Chlamydomonas reinhardtii (Chlamydomonas smithii).